The chain runs to 371 residues: 4-hydroxy-3-methylbut-2-en-1-yl diphosphate synthase (flavodoxin) (371 aa).

4 residues coordinate [4Fe-4S] cluster: C270, C273, C305, and E312.

It belongs to the IspG family. [4Fe-4S] cluster is required as a cofactor.

It carries out the reaction (2E)-4-hydroxy-3-methylbut-2-enyl diphosphate + oxidized [flavodoxin] + H2O + 2 H(+) = 2-C-methyl-D-erythritol 2,4-cyclic diphosphate + reduced [flavodoxin]. It participates in isoprenoid biosynthesis; isopentenyl diphosphate biosynthesis via DXP pathway; isopentenyl diphosphate from 1-deoxy-D-xylulose 5-phosphate: step 5/6. Its function is as follows. Converts 2C-methyl-D-erythritol 2,4-cyclodiphosphate (ME-2,4cPP) into 1-hydroxy-2-methyl-2-(E)-butenyl 4-diphosphate. The protein is 4-hydroxy-3-methylbut-2-en-1-yl diphosphate synthase (flavodoxin) of Shewanella woodyi (strain ATCC 51908 / MS32).